Reading from the N-terminus, the 267-residue chain is RWD domain-containing protein 3 (267 aa).

Residues Gln7–Ile114 form the RWD domain. Interaction with UBE2I/UBC9 regions lie at residues Ala13–Ile15 and Val100–Glu102.

As to quaternary structure, interacts with UBE2I/UBC9, NFKBIA, HIF1A and NCOA2.

The protein resides in the nucleus. It localises to the cytoplasm. In terms of biological role, enhancer of SUMO conjugation. Via its interaction with UBE2I/UBC9, increases SUMO conjugation to proteins by promoting the binding of E1 and E2 enzymes, thioester linkage between SUMO and UBE2I/UBC9 and transfer of SUMO to specific target proteins which include HIF1A, PIAS, NFKBIA, NR3C1 and TOP1. Positively regulates the NF-kappa-B signaling pathway by enhancing the sumoylation of NF-kappa-B inhibitor alpha (NFKBIA), promoting its stabilization which consequently leads to an increased inhibition of NF-kappa-B transcriptional activity. Negatively regulates the hypoxia-inducible factor-1 alpha (HIF1A) signaling pathway by increasing the sumoylation of HIF1A, promoting its stabilization, transcriptional activity and the expression of its target gene VEGFA during hypoxia. Has no effect on ubiquitination. The sequence is that of RWD domain-containing protein 3 (Rwdd3) from Rattus norvegicus (Rat).